We begin with the raw amino-acid sequence, 1021 residues long: MGKGAGRDKYEPTATSEHGTKKKKAKERDMDELKKEISMDDHKLSLDELHRKYGTDLSRGLTTARAAEILARDGPNTLTPPPTTPEWVKFCRQLFGGFSLLLWIGSLLCFLAYGITSVMEGEPNSDNLYLGVVLAAVVIITGCFSYYQEAKSSKIMESFKNMVPQQALVVRNGEKMSINAEGVVVGDLVEVKGGDRIPADLRIISAHGCKVDNSSLTGESEPQTRSPDFSNENPLETRNIAFFSTNCVEGTAVGIVISTGDRTVMGRIASLASGLEGGKTPIAMEIEHFIHLITGVAVFLGVSFFILSLILEYTWLEAVIFLIGIIVANVPEGLLATVTVCLTLTAKRMARKNCLVKNLEAVGTLGSTSTICSDKTGTLTQNRMTVAHMWFDNQIHEADTTENQSGASFDKSSATWLALSRIAGLCNRAVFQANQENVPILKRAVAGDASESALLKCIELCCGSVKEMRERYPKVVEIPFNSTNKYQLSIHKNANAGESRHLLVMKGAPERILDRCDSILIHGKVQPLDEEIKDAFQNAYLELGGLGERVLGFCHLALPDDQFPEGFQFDTDEVNFPVEKLCFVGLMSMIDPPRAAVPDAVGKCRSAGIKVIMVTGDHPITAKAIAKGVGIISDGNETVEDIAARLNIPVSQVNPRDAKACVVHGSDLKDMTSEQLDDILLHHTEIVFARTSPQQKLIIVEGCQRQGAIVAVTGDGVNDSPALKKADIGVAMGIAGSDVSKQAADMILLDDNFASIVTGVEEGRLIFDNLKKSIAYTLTSNIPEITPFLIFIIANIPLPLGTCTILCIDLGTDMVPAISLAYEQAESDIMKRQPRNPKTDKLVNERLISMAYGQIGMIQALGGFFTYFVIMAENGFLPSGLVGIRLQWDDRWINDVEDSYGQQWTFEQRKIVEFTCHTAFFVSIVVVQWADLIICKTRRNSVFQQGMKNKILIFGLFEETALAAFLSYCPGMDVALRMYPLKPTWWFCAFPYSLLIFLYDEIRKLIIRRNPGGWVERETYY.

Residues 1-5 constitute a propeptide that is removed on maturation; that stretch reads MGKGA. Residues 1–11 show a composition bias toward basic and acidic residues; the sequence is MGKGAGRDKYE. A disordered region spans residues 1-31; that stretch reads MGKGAGRDKYEPTATSEHGTKKKKAKERDMD. The Cytoplasmic portion of the chain corresponds to 6-85; it reads GRDKYEPTAT…NTLTPPPTTP (80 aa). A Phosphotyrosine modification is found at Y10. At S16 the chain carries Phosphoserine; by PKC. The segment at 80-82 is phosphoinositide-3 kinase binding; that stretch reads PPP. A helical membrane pass occupies residues 86-106; sequence EWVKFCRQLFGGFSLLLWIGS. At 107 to 129 the chain is on the extracellular side; the sequence is LLCFLAYGITSVMEGEPNSDNLY. A helical transmembrane segment spans residues 130-150; the sequence is LGVVLAAVVIITGCFSYYQEA. At 151-286 the chain is on the cytoplasmic side; it reads KSSKIMESFK…GGKTPIAMEI (136 aa). The tract at residues 214-233 is disordered; it reads SSLTGESEPQTRSPDFSNEN. The chain crosses the membrane as a helical span at residues 287 to 306; the sequence is EHFIHLITGVAVFLGVSFFI. The Extracellular portion of the chain corresponds to 307-318; that stretch reads LSLILEYTWLEA. The chain crosses the membrane as a helical span at residues 319–336; the sequence is VIFLIGIIVANVPEGLLA. The Cytoplasmic portion of the chain corresponds to 337–770; it reads TVTVCLTLTA…EEGRLIFDNL (434 aa). D374 (4-aspartylphosphate intermediate) is an active-site residue. K485 is a binding site for ATP. The Mg(2+) site is built by D715 and D719. A helical transmembrane segment spans residues 771-790; that stretch reads KKSIAYTLTSNIPEITPFLI. Residues 791 to 800 are Extracellular-facing; the sequence is FIIANIPLPL. A helical transmembrane segment spans residues 801–821; that stretch reads GTCTILCIDLGTDMVPAISLA. Residues 822-841 are Cytoplasmic-facing; it reads YEQAESDIMKRQPRNPKTDK. The chain crosses the membrane as a helical span at residues 842–864; the sequence is LVNERLISMAYGQIGMIQALGGF. The Extracellular segment spans residues 865–916; the sequence is FTYFVIMAENGFLPSGLVGIRLQWDDRWINDVEDSYGQQWTFEQRKIVEFTC. A helical transmembrane segment spans residues 917 to 936; the sequence is HTAFFVSIVVVQWADLIICK. Over 937-949 the chain is Cytoplasmic; sequence TRRNSVFQQGMKN. Residue S941 is modified to Phosphoserine; by PKA. A helical membrane pass occupies residues 950–968; that stretch reads KILIFGLFEETALAAFLSY. Residues 969-983 lie on the Extracellular side of the membrane; that stretch reads CPGMDVALRMYPLKP. A helical transmembrane segment spans residues 984-1004; it reads TWWFCAFPYSLLIFLYDEIRK. At 1005–1021 the chain is on the cytoplasmic side; that stretch reads LIIRRNPGGWVERETYY.

This sequence belongs to the cation transport ATPase (P-type) (TC 3.A.3) family. Type IIC subfamily. As to quaternary structure, the sodium/potassium-transporting ATPase is composed of a catalytic alpha subunit, an auxiliary non-catalytic beta subunit and an additional regulatory subunit. In terms of processing, phosphorylation on Tyr-10 modulates pumping activity.

It is found in the cell membrane. The protein localises to the sarcolemma. It catalyses the reaction K(+)(out) + Na(+)(in) + ATP + H2O = K(+)(in) + Na(+)(out) + ADP + phosphate + H(+). Its function is as follows. This is the catalytic component of the active enzyme, which catalyzes the hydrolysis of ATP coupled with the exchange of sodium and potassium ions across the plasma membrane. This action creates the electrochemical gradient of sodium and potassium ions, providing the energy for active transport of various nutrients. This is Sodium/potassium-transporting ATPase subunit alpha-1 (ATP1A1) from Gallus gallus (Chicken).